The chain runs to 132 residues: Small ribosomal subunit protein uS8 (132 aa).

The protein belongs to the universal ribosomal protein uS8 family. Part of the 30S ribosomal subunit. Contacts proteins S5 and S12.

One of the primary rRNA binding proteins, it binds directly to 16S rRNA central domain where it helps coordinate assembly of the platform of the 30S subunit. The protein is Small ribosomal subunit protein uS8 of Nocardia farcinica (strain IFM 10152).